We begin with the raw amino-acid sequence, 185 residues long: Ribosome-recycling factor (185 aa).

It belongs to the RRF family.

The protein resides in the cytoplasm. Functionally, responsible for the release of ribosomes from messenger RNA at the termination of protein biosynthesis. May increase the efficiency of translation by recycling ribosomes from one round of translation to another. The protein is Ribosome-recycling factor of Finegoldia magna (strain ATCC 29328 / DSM 20472 / WAL 2508) (Peptostreptococcus magnus).